The following is a 187-amino-acid chain: Adenine phosphoribosyltransferase (187 aa).

Residue 133-137 (ATGGS) coordinates AMP.

It belongs to the purine/pyrimidine phosphoribosyltransferase family. In terms of assembly, homodimer. It depends on Mg(2+) as a cofactor.

The protein resides in the cytoplasm. It localises to the nucleus. The catalysed reaction is AMP + diphosphate = 5-phospho-alpha-D-ribose 1-diphosphate + adenine. The protein operates within purine metabolism; AMP biosynthesis via salvage pathway; AMP from adenine: step 1/1. Its function is as follows. Catalyzes a salvage reaction resulting in the formation of AMP, that is energically less costly than de novo synthesis. The sequence is that of Adenine phosphoribosyltransferase (APT1) from Eremothecium gossypii (strain ATCC 10895 / CBS 109.51 / FGSC 9923 / NRRL Y-1056) (Yeast).